The sequence spans 764 residues: Protective antigen (764 aa).

The N-terminal stretch at 1 to 29 (MKKRKVLIPLMALSTILVSSTGNLEVIQA) is a signal peptide. The tract at residues 30–287 (EVKQENRLLN…PEARHPLVAA (258 aa)) is domain 1, calcium-binding; LF and EF binding sites. The 137-residue stretch at 43–179 (SSSQGLLGYY…NKKEVISSDN (137 aa)) folds into the PA14 domain. The interval 176-214 (SSDNLQLPELKQKSSNSRKKRSTSAGPTVPDRDNDGIPD) is disordered. Ca(2+)-binding residues include Asp206, Asp208, Asp210, Ile212, and Glu217. An alpha-clamp region spans residues 231 to 239 (FLSPWISNI). The Ca(2+) site is built by Ser251, Lys254, and Asp264. The segment at 288–516 (YPIVHVDMEN…SEVLPQIQET (229 aa)) is domain 2, membrane insertion and heptamerization. Residues 302–333 (KNEDQSTQNTDSQTRTISKNTSTSRTHTSEVH) form a disordered region. The span at 306-327 (QSTQNTDSQTRTISKNTSTSRT) shows a compositional bias: polar residues. 2 beta stranded membrane passes run 331–342 (EVHGNAEVHASF) and 345–354 (IGGSVSAGFS). The segment at 517–624 (TARIIFNGKD…KMNILIRDKR (108 aa)) is domain 3, heptamerization. The interval 625–764 (FHYDRNNIAV…IFSKKGYEIG (140 aa)) is domain 4, binding to the receptor.

The protein belongs to the bacterial binary toxin family. Interacts with host ANTXR1 and ANTXR2. In terms of assembly, homooligomer; homooligomerizes to form homoheptamers (PA-63(7)) or homooctamers (PA-63(8)). PA-63(7) or PA-63(8) form ring-shaped oligomers that are in a pre-pore conformation, which do not penetrate the host membrane. PA-63(8) displays an enhanced stability, suggesting that this form circulates in the blood to reach and exert toxicity even in distant tissues. Interacts with lethal factor (LF) and edema factor (EF); can bind LF and EF simultaneously and interaction takes place following homooligomerization on the host cell membrane. PA-63(7) homoheptamer interacts with three molecules of LF to form the PA(7)LF(3) complex, in which the relative position of the N-terminal alpha-helices in the three LFs determines which factor is translocated first. Post-translationally, proteolytic activation by FURIN cleaves the protein in two parts, PA-20 and PA-63; the latter is the mature protein. The cleavage occurs at the cell surface and probably in the serum of infected animals as well; both native and cleaved PA are able to bind to the cell receptor. The release of PA-20 from the remaining receptor-bound PA-63 exposes the binding site for EF and LF, and promotes oligomerization and internalization of the protein.

The protein localises to the secreted. It localises to the host cell membrane. The protein resides in the host endosome membrane. Its function is as follows. Protective antigen constitutes one of the three proteins composing the anthrax toxin; it mediates attachment to host cells and translocation of edema factor (EF) and lethal factor (LF) into the host cytoplasm. PA associated with LF forms the lethal toxin (LeTx) and causes death when injected; PA associated with EF forms the edema toxin (EdTx) and produces edema. PA induces immunity to infection with anthrax. In terms of biological role, mediates the attachment to host cells by binding host cell receptors ANTXR1 and ANTXR2. Following host cell surface attachment, PA is cleaved by FURIN to generate the PA-63 (Protective antigen PA-63) form, which constitutes the mature form of the protein that oligomerizes and forms a pore to translocate the enzymatic toxin components edema factor (EF) and lethal factor (LF) into the host cytosol. Mature form that oligomerizes and forms a pore to translocate the enzymatic toxin components edema factor (EF) and lethal factor (LF) into the host cytosol. Following attachment to host cell receptors and cleavage by FURIN, homooligomerizes to form ring-shaped oligomers that are in a pre-pore conformation, and associates with EF and LF. Toxin-leaded complexes are then endocytosed in a clathrin-dependent process, followed by a conformational change of oligomerized PA-63 from the pre-pore to pore state, which is triggered by the low pH in the endosome. Once active, the pore mediates unfolding of EF and LF, which pass through the pore and translocate into the host cytosol. The sequence is that of Protective antigen (pagA) from Bacillus anthracis.